We begin with the raw amino-acid sequence, 687 residues long: Dictomallein (687 aa).

Disordered stretches follow at residues 1-45 (MGNG…SRRL) and 73-112 (TAGGAAPLTPAVASPAGPTGSTPGSTPGATTAPAPSSTSA). One can recognise a Peptidase M66 domain in the interval 233 to 501 (PVFGTDADVQ…QAWIASRVLA (269 aa)). A Zn(2+)-binding site is contributed by His393. Glu394 is an active-site residue. Residues His397 and His403 each coordinate Zn(2+).

Belongs to the dictomallein family. Zn(2+) serves as cofactor.

This is Dictomallein (dtmL) from Burkholderia pseudomallei (strain 668).